The chain runs to 440 residues: Chromosomal replication initiator protein DnaA (440 aa).

A domain I, interacts with DnaA modulators region spans residues 1–72; sequence MTELDSLWEA…KEFAQRELGR (72 aa). The segment at 72–103 is domain II; that stretch reads RNIEPHYVLEGEFTYTNKKTEDDPTPSFEMDT. A domain III, AAA+ region region spans residues 104–320; that stretch reads PLNPHYNFGT…GALTKVQAFA (217 aa). Positions 148, 150, 151, and 152 each coordinate ATP. The tract at residues 321 to 440 is domain IV, binds dsDNA; sequence NLSGERITPS…ITKLKAKLRS (120 aa).

Belongs to the DnaA family. Oligomerizes as a right-handed, spiral filament on DNA at oriC.

Its subcellular location is the cytoplasm. Its function is as follows. Plays an essential role in the initiation and regulation of chromosomal replication. ATP-DnaA binds to the origin of replication (oriC) to initiate formation of the DNA replication initiation complex once per cell cycle. Binds the DnaA box (a 9 base pair repeat at the origin) and separates the double-stranded (ds)DNA. Forms a right-handed helical filament on oriC DNA; dsDNA binds to the exterior of the filament while single-stranded (ss)DNA is stabiized in the filament's interior. The ATP-DnaA-oriC complex binds and stabilizes one strand of the AT-rich DNA unwinding element (DUE), permitting loading of DNA polymerase. After initiation quickly degrades to an ADP-DnaA complex that is not apt for DNA replication. Binds acidic phospholipids. The chain is Chromosomal replication initiator protein DnaA from Limosilactobacillus reuteri (strain DSM 20016) (Lactobacillus reuteri).